Here is a 153-residue protein sequence, read N- to C-terminus: UPF0251 protein CT0950 (153 aa).

The protein belongs to the UPF0251 family.

This Chlorobaculum tepidum (strain ATCC 49652 / DSM 12025 / NBRC 103806 / TLS) (Chlorobium tepidum) protein is UPF0251 protein CT0950.